A 701-amino-acid polypeptide reads, in one-letter code: ABC transporter G family member 23 (701 aa).

Positions isoleucine 7 to tyrosine 237 constitute an ABC transporter domain. Glycine 39 to threonine 46 serves as a coordination point for ATP. The next 6 helical transmembrane spans lie at phenylalanine 335–isoleucine 355, phenylalanine 493–isoleucine 513, histidine 541–valine 561, leucine 574–isoleucine 596, leucine 608–isoleucine 628, and leucine 665–isoleucine 685. Residues phenylalanine 459–glycine 686 enclose the ABC transmembrane type-2 domain.

Belongs to the ABC transporter superfamily. ABCG family.

Its subcellular location is the membrane. This is ABC transporter G family member 23 (abcG23) from Dictyostelium discoideum (Social amoeba).